We begin with the raw amino-acid sequence, 943 residues long: 2-oxoglutarate dehydrogenase E1 component (943 aa).

This sequence belongs to the alpha-ketoglutarate dehydrogenase family. In terms of assembly, homodimer. Part of the 2-oxoglutarate dehydrogenase (OGDH) complex composed of E1 (2-oxoglutarate dehydrogenase), E2 (dihydrolipoamide succinyltransferase) and E3 (dihydrolipoamide dehydrogenase); the complex contains multiple copies of the three enzymatic components (E1, E2 and E3). Thiamine diphosphate is required as a cofactor.

It catalyses the reaction N(6)-[(R)-lipoyl]-L-lysyl-[protein] + 2-oxoglutarate + H(+) = N(6)-[(R)-S(8)-succinyldihydrolipoyl]-L-lysyl-[protein] + CO2. Functionally, E1 component of the 2-oxoglutarate dehydrogenase (OGDH) complex which catalyzes the decarboxylation of 2-oxoglutarate, the first step in the conversion of 2-oxoglutarate to succinyl-CoA and CO(2). The sequence is that of 2-oxoglutarate dehydrogenase E1 component (sucA) from Azotobacter vinelandii.